The following is a 228-amino-acid chain: tRNA (guanine-N(1)-)-methyltransferase (228 aa).

S-adenosyl-L-methionine is bound by residues Gly-111 and 135–140 (LGDYVL).

Belongs to the RNA methyltransferase TrmD family. In terms of assembly, homodimer.

It is found in the cytoplasm. The enzyme catalyses guanosine(37) in tRNA + S-adenosyl-L-methionine = N(1)-methylguanosine(37) in tRNA + S-adenosyl-L-homocysteine + H(+). Its function is as follows. Specifically methylates guanosine-37 in various tRNAs. This Clavibacter sepedonicus (Clavibacter michiganensis subsp. sepedonicus) protein is tRNA (guanine-N(1)-)-methyltransferase.